We begin with the raw amino-acid sequence, 192 residues long: Protein FAM210B, mitochondrial (192 aa).

The N-terminal 58 residues, 1–58 (MAGLLALLGPAGRVGARVRPRATWLLGATAPCAPPPLALALLPPRLDARLLRTARGDC), are a transit peptide targeting the mitochondrion. The interval 57 to 80 (DCRGHQDPSQATGTTGSSVSCTEE) is disordered. The span at 63–77 (DPSQATGTTGSSVSC) shows a compositional bias: polar residues. A DUF1279 domain is found at 80 to 191 (EKKQSKSQQL…VGFFKPPAAK (112 aa)). Transmembrane regions (helical) follow at residues 99 to 119 (VGVSLHIGISLISLGIFYMVV) and 150 to 170 (FVVAYAIHKLFAPVRISITLV).

This sequence belongs to the FAM210 family. In terms of tissue distribution, expressed in late erythroblast differentiation stages. Underexpressed in ovarian cancer epithelia cells compared with normal human ovarian surface epithelia.

It localises to the mitochondrion. The protein localises to the mitochondrion outer membrane. Functionally, plays a role in erythroid differentiation. Involved in cell proliferation and tumor cell growth suppression. Involved in the metabolic reprogramming of cancer cells in a PDK4-dependent manner. This chain is Protein FAM210B, mitochondrial, found in Homo sapiens (Human).